The sequence spans 304 residues: N-acetyl-D-glucosamine kinase (304 aa).

ATP-binding positions include 4–11 (GFDMGGTK) and 133–140 (GVGGGLIV). Positions 157, 177, 179, and 184 each coordinate Zn(2+).

This sequence belongs to the ROK (NagC/XylR) family. NagK subfamily.

The enzyme catalyses N-acetyl-D-glucosamine + ATP = N-acetyl-D-glucosamine 6-phosphate + ADP + H(+). It participates in cell wall biogenesis; peptidoglycan recycling. Catalyzes the phosphorylation of N-acetyl-D-glucosamine (GlcNAc) derived from cell-wall degradation, yielding GlcNAc-6-P. The protein is N-acetyl-D-glucosamine kinase of Yersinia pseudotuberculosis serotype O:3 (strain YPIII).